The following is a 357-amino-acid chain: CCN family member 3 (357 aa).

Positions 1-31 (MQSVQSTSFCLRKQCLCLTFLLLHLLGQVAA) are cleaved as a signal peptide. In terms of domain architecture, IGFBP N-terminal spans 32 to 105 (TQRCPPQCPG…SNQTGICTAV (74 aa)). Cystine bridges form between C35-C61, C39-C63, C43-C64, C50-C67, C75-C89, and C81-C102. N-linked (GlcNAc...) asparagine glycosylation is present at N97. The region spanning 108-174 (DNCVFDGVIY…GECCEKWICG (67 aa)) is the VWFC domain. The TSP type-1 domain maps to 205–250 (NCIEQTTEWTACSKSCGMGFSTRVTNRNRQCEMLKQTRLCMVRPCE). C244 carries the S-palmitoyl cysteine lipid modification. 5 disulfides stabilise this stretch: C264-C301, C281-C315, C292-C331, C295-C333, and C300-C337. A CTCK domain is found at 264–338 (CLRTKKSLKA…GTCTCHTNCP (75 aa)). A glycan (N-linked (GlcNAc...) asparagine) is linked at N280.

Belongs to the CCN family. Interacts with FBLN1. Interacts (via CTCK domain) with NOTCH1 (via the EGF-like repeat region). Interacts with GJA1/CX43. Interacts with ITGA5:ITGB1, ITGAV:ITGB3 and ITGAV:ITGB5. Interacts with ZDHHC22; the interaction may lead to CCN3 palmitoylation. Post-translationally, may be palmitoylated on Cys-244, which is important for extracellular secretion. In terms of tissue distribution, expressed in endothelial cells (at protein level). Expressed in bone marrow and thymic cells.

It localises to the secreted. It is found in the cytoplasm. The protein resides in the cell junction. The protein localises to the gap junction. Its function is as follows. Immediate-early protein playing a role in various cellular processes including proliferation, adhesion, migration, differentiation and survival. Acts by binding to integrins or membrane receptors such as NOTCH1. Essential regulator of hematopoietic stem and progenitor cell function. Inhibits myogenic differentiation through the activation of Notch-signaling pathway. Inhibits vascular smooth muscle cells proliferation by increasing expression of cell-cycle regulators such as CDKN2B or CDKN1A independently of TGFB1 signaling. Ligand of integrins ITGAV:ITGB3 and ITGA5:ITGB1, acts directly upon endothelial cells to stimulate pro-angiogenic activities and induces angiogenesis. In endothelial cells, supports cell adhesion, induces directed cell migration (chemotaxis) and promotes cell survival. Also plays a role in cutaneous wound healing acting as integrin receptor ligand. Supports skin fibroblast adhesion through ITGA5:ITGB1 and ITGA6:ITGB1 and induces fibroblast chemotaxis through ITGAV:ITGB5. Seems to enhance bFGF-induced DNA synthesis in fibroblasts. Involved in bone regeneration as a negative regulator. Enhances the articular chondrocytic phenotype, whereas it repressed the one representing endochondral ossification. Impairs pancreatic beta-cell function, inhibits beta-cell proliferation and insulin secretion. Plays a role as negative regulator of endothelial pro-inflammatory activation reducing monocyte adhesion, its anti-inflammatory effects occur secondary to the inhibition of NF-kappaB signaling pathway. Contributes to the control and coordination of inflammatory processes in atherosclerosis. Attenuates inflammatory pain through regulation of IL1B- and TNF-induced MMP9, MMP2 and CCL2 expression. Inhibits MMP9 expression through ITGB1 engagement. Brain osteoanabolic hormone. Drives osteogenesis in osteochondral skeletal stem cells. During lactation, maintains the maternal skeleton and viability of offspring. The polypeptide is CCN family member 3 (Homo sapiens (Human)).